Reading from the N-terminus, the 385-residue chain is Zinc finger protein B385R (385 aa).

C2H2-type zinc fingers lie at residues 166–190 (LQCP…FYNH) and 168–190 (CPNC…FYNH).

This sequence belongs to the asfivirus B385R family.

The polypeptide is Zinc finger protein B385R (African swine fever virus (isolate Tick/South Africa/Pretoriuskop Pr4/1996) (ASFV)).